The chain runs to 208 residues: Anti-sigma-W factor RsiW (208 aa).

Residues 1–87 (MSCPEQIVQL…ASVKRWFRTH (87 aa)) are Cytoplasmic-facing. Zn(2+)-binding residues include Cys-3, His-30, Cys-34, and Cys-37. Residues 88 to 108 (PVIAAAAVFIILMGGGFFNSW) form a helical membrane-spanning segment. At 109-208 (HNDHNFSVSK…LDAFNPNGEE (100 aa)) the chain is on the extracellular side.

The protein belongs to the zinc-associated anti-sigma factor (ZAS) superfamily. Anti-sigma-W factor family. Forms a heterodimer with cognate sigma factor SigW, which probably prevents SigW from binding to DNA. Zn(2+) is required as a cofactor. Post-translationally, is processed by successive proteolytic events. First, the extracellular region of RsiW is cleaved by PrsW (site-1 cleavage) in response to cell envelope stresses. In a reconstituted E.coli system PrsW cuts between Ala-168 and Ser-169 followed by trimming by E.coli Tsp; the endogenous extracellular exopeptidase responsible for the event in B.subtilis has not been identified. Next, it undergoes cleavage at an intramembrane site (site-2 cleavage) mediated by RasP. This cleavage uncovers a cryptic proteolytic tag with conserved alanine residues in the transmembrane segment, that is recognized mainly by the ClpXP protease, which completely degrades the protein in the cytoplasm and leads to the induction of the sigma-W-controlled genes.

It is found in the cell membrane. The anti-sigma factor for extracytoplasmic function (ECF) sigma factor sigma-W (SigW). Holds SigW, its cognate ECF sigma factor, in an inactive form until released by regulated intramembrane proteolysis (RIP). SigW and RsiW mediate cell response to cell wall stress. RIP occurs when an extracytoplasmic signal triggers a concerted proteolytic cascade to transmit information and elicit cellular responses. The membrane-spanning regulatory substrate protein is first cut periplasmically (site-1 protease, S1P, PrsW), then within the membrane itself (site-2 protease, S2P, RasP), while cytoplasmic proteases finish degrading the anti-sigma factor, liberating sigma-W. In Bacillus subtilis (strain 168), this protein is Anti-sigma-W factor RsiW (rsiW).